An 855-amino-acid polypeptide reads, in one-letter code: Coiled-coil domain-containing protein 87 (855 aa).

2 disordered regions span residues 23-43 and 278-302; these read LFPSKAKPPPEPPKRPSQDAT and SRPSPMVPLPSHSPSSESHQFPTSP. Residues 287–296 are compositionally biased toward low complexity; the sequence is PSHSPSSESH. 2 coiled-coil regions span residues 387–413 and 764–789; these read TRRLTAQHHLEKLQQMIKSLQEEEASG and RSYLQRKLNRMESNLVSLLERIESVF.

It belongs to the CCDC87 family. In terms of tissue distribution, specifically expressed in testis (at protein level). Not detected in other tissues tested (at protein level). In the testis, localizes to pachytene spermatocytes and spermatids.

Plays a role in spermatogenesis, where it is important for normal sperm head morphology. Also required for the acrosome reaction and thus normal male fertility. The protein is Coiled-coil domain-containing protein 87 (Ccdc87) of Mus musculus (Mouse).